The chain runs to 137 residues: Large ribosomal subunit protein uL16 (137 aa).

It belongs to the universal ribosomal protein uL16 family. As to quaternary structure, part of the 50S ribosomal subunit.

Functionally, binds 23S rRNA and is also seen to make contacts with the A and possibly P site tRNAs. In Thioalkalivibrio sulfidiphilus (strain HL-EbGR7), this protein is Large ribosomal subunit protein uL16.